A 667-amino-acid chain; its full sequence is Leucine-rich repeat-containing protein 43 (667 aa).

The segment covering M1–Y11 has biased composition (polar residues). The disordered stretch occupies residues M1–T24. LRR repeat units lie at residues K148–P169, T170–P191, R194–Y213, and Q221–L242. The LRRCT domain occupies N256–L294. Disordered regions lie at residues F374–M407, E533–P570, and S616–Q640. The segment covering T377–P386 has biased composition (acidic residues). Over residues R390–F399 the composition is skewed to basic residues. Positions K540–D553 are enriched in basic and acidic residues. The span at K617 to R627 shows a compositional bias: basic residues.

This chain is Leucine-rich repeat-containing protein 43 (Lrrc43), found in Mus musculus (Mouse).